The primary structure comprises 380 residues: Homoserine O-acetyltransferase (380 aa).

One can recognise an AB hydrolase-1 domain in the interval 70–366 (NAVLVFHALT…SPHGHDAFLI (297 aa)). Catalysis depends on Ser-186, which acts as the Nucleophile. Residue Arg-250 participates in substrate binding. Active-site residues include Asp-333 and His-361. Asp-362 serves as a coordination point for substrate.

The protein belongs to the AB hydrolase superfamily. MetX family. In terms of assembly, homodimer.

The protein localises to the cytoplasm. It carries out the reaction L-homoserine + acetyl-CoA = O-acetyl-L-homoserine + CoA. The protein operates within amino-acid biosynthesis; L-methionine biosynthesis via de novo pathway; O-acetyl-L-homoserine from L-homoserine: step 1/1. Functionally, transfers an acetyl group from acetyl-CoA to L-homoserine, forming acetyl-L-homoserine. The chain is Homoserine O-acetyltransferase from Thermus thermophilus (strain ATCC 27634 / DSM 579 / HB8).